A 508-amino-acid polypeptide reads, in one-letter code: Photosystem II CP47 reaction center protein (508 aa).

The next 6 membrane-spanning stretches (helical) occupy residues 21–36 (AVHIMHTALVAGWAGS), 101–115 (IVFSGLCFLAAIWHW), 140–156 (GIHLFLAGVACFGFGAF), 203–218 (IAAGTLGILAGLFHLS), 237–252 (VLSSSIAAVFFAAFVV), and 457–472 (SFALLFFFGHIWHGAR).

Belongs to the PsbB/PsbC family. PsbB subfamily. In terms of assembly, PSII is composed of 1 copy each of membrane proteins PsbA, PsbB, PsbC, PsbD, PsbE, PsbF, PsbH, PsbI, PsbJ, PsbK, PsbL, PsbM, PsbT, PsbX, PsbY, PsbZ, Psb30/Ycf12, at least 3 peripheral proteins of the oxygen-evolving complex and a large number of cofactors. It forms dimeric complexes. Binds multiple chlorophylls. PSII binds additional chlorophylls, carotenoids and specific lipids. is required as a cofactor.

Its subcellular location is the plastid. It is found in the chloroplast thylakoid membrane. In terms of biological role, one of the components of the core complex of photosystem II (PSII). It binds chlorophyll and helps catalyze the primary light-induced photochemical processes of PSII. PSII is a light-driven water:plastoquinone oxidoreductase, using light energy to abstract electrons from H(2)O, generating O(2) and a proton gradient subsequently used for ATP formation. In Trachelium caeruleum (Blue throatwort), this protein is Photosystem II CP47 reaction center protein.